A 461-amino-acid chain; its full sequence is Deoxyhypusine synthase (461 aa).

Spermidine is bound by residues 166 to 167, E331, H377, 403 to 405, and 412 to 418; these read EH, GSD, and EAVSWGK. The active-site Nucleophile is the K418. A helical transmembrane segment spans residues 428 to 448; that stretch reads VYSEVTIVFPLIVVHVFVAWV.

Belongs to the deoxyhypusine synthase family. As to quaternary structure, heterotetramer formed by a homodimer of the non-catalytic regulatory subunit DHSp and a homodimer of the catalytic subunit DHSc where DHSc appears to bind spermidine and DHSp appears to bind NAD(+). NAD(+) serves as cofactor.

It is found in the membrane. It carries out the reaction [eIF5A protein]-L-lysine + spermidine = [eIF5A protein]-deoxyhypusine + propane-1,3-diamine. The protein operates within protein modification; eIF5A hypusination. With respect to regulation, allosterically activated by DHSp. Inhibited by spermididine analog N1-guanyl-1,7-diamineoheptane (GC7). Its function is as follows. In association with the non-catalytic regulatory subunit DHSp, catalyzes the NAD-dependent oxidative cleavage of spermidine and the subsequent transfer of the butylamine moiety of spermidine to the epsilon-amino group of a specific lysine residue of the eIF5A precursor protein to form the intermediate deoxyhypusine residue. Regulates protein levels of its regulatory subunit DHSp. Required for cell growth and survival. The sequence is that of Deoxyhypusine synthase from Trypanosoma brucei brucei (strain 927/4 GUTat10.1).